Consider the following 632-residue polypeptide: Chaperone protein DnaK (632 aa).

Threonine 198 carries the phosphothreonine; by autocatalysis modification. A disordered region spans residues arginine 524–arginine 557.

It belongs to the heat shock protein 70 family.

Functionally, acts as a chaperone. This Nitrobacter hamburgensis (strain DSM 10229 / NCIMB 13809 / X14) protein is Chaperone protein DnaK.